A 1216-amino-acid polypeptide reads, in one-letter code: ATP-dependent helicase/nuclease subunit A (1216 aa).

One can recognise a UvrD-like helicase ATP-binding domain in the interval 26-488; sequence QKKTAEQIEA…ILLKENFRSS (463 aa). Residue 47-54 participates in ATP binding; that stretch reads ASAGSGKT. Positions 515-802 constitute a UvrD-like helicase C-terminal domain; sequence KHQLVFANTK…ELMTIHKSKG (288 aa).

Belongs to the helicase family. AddA subfamily. As to quaternary structure, heterodimer of AddA and AddB/RexB. The cofactor is Mg(2+).

It catalyses the reaction Couples ATP hydrolysis with the unwinding of duplex DNA by translocating in the 3'-5' direction.. It carries out the reaction ATP + H2O = ADP + phosphate + H(+). Functionally, the heterodimer acts as both an ATP-dependent DNA helicase and an ATP-dependent, dual-direction single-stranded exonuclease. Recognizes the chi site generating a DNA molecule suitable for the initiation of homologous recombination. The AddA nuclease domain is required for chi fragment generation; this subunit has the helicase and 3' -&gt; 5' nuclease activities. The polypeptide is ATP-dependent helicase/nuclease subunit A (Streptococcus pneumoniae (strain Hungary19A-6)).